We begin with the raw amino-acid sequence, 1568 residues long: MSQVEKVSILGSDSIHVGYGIQDHIVEETLTNLKSSTYVIITDSNMEATAPYQTLSSKFEAGLKEFRPESRLFYYAVSPGENNKSRETKAQVEDFLLQKGCTRDTVIIAVGGGVVGDMIGFVAATFMRGVRVVQVPTTLLAMVDSSIGGKTAVDTPLGKNFVGAFHQPKYVFVDVSFLTTLPTRQFINGMAEVVKTAAIWNEEEFTRLENFAKTFIAVVTSDNIDLATIKDDLVKTVLESIRVKADVVSADEKESSLRNLLNFGHTIGHAIEAIVTPQALHGECVAVGMVKEAELARYWGVLSPVAVARLVNCIAAYNLPTSVGDKIFVQRIGHKRHFIQINTLLEKMAIDKKNDGSKIRTVILEAIGKCYQLKAHEVSKQDLSFVLTDETLVHPFQEETTPKENVVIPPGSKSISNRALILAALGKGTVRIKNLLHSDDTKHMLAAVAALKGAEISTEDNGDTIVVKGNGGNFITCDEQLYLGNAGTASRFLTTVASLVNVNEQSNDYTVLTGNARMQERPVGPLVNALRANGSEIEYLNNEGSLPLKIKAGKGLKGGRVELAATISSQYVSSILMCAPYAEKEVTLALVGGKPISQLYIDMTIAMMKDFGISVTRDPHEEHTYHIPKGVYSNPGVYEVESDASSATYPLAFAAMTGTSCTVPNIGSSSLQGDARFAVDVLKPMGCTVEQTSTSTTVRGPSKGSLKPLTHVDMEPMTDAFLTASVVAAIANSSVPTQITGIANQRVKECNRILAMVDELAKFGVRAEELPDGIEIYGIDYKNLKVPSLENRGVCTYDDHRVAMSFSLLAGMCPEPVLITERSCTGKTWPGWWDVLHTKFGVELEGYEEPKDLNDPALLVNKEVNGDKSIVVIGMRAAGKSTLSRWIADFMGFELIDLDTVFEQTHGDIREYIKANGWGRFRELEAGIMKEYLTKCSSRHVISTGGGIVESEESRDILKSYTKTGGIVLHLHRDLDETIVFLSSDTTRPAYVSEIKDVWARREKWYHECSNYHFYSSHCGTEEEFKKLRHSFVSYLKTITGAGLSPVPKGRSFVLSLACSDLNDIAENLEDIVAGCEAIELRVDLLKDYSPSFVADQTAVLRKFVNLPIIYTIRTKGQGGNFPDEDVQALEQLSYLGIKLGVDYLDVQLSNSEKFVKSIIEKKAFTKIIATHIDLAGLPWTRAEWDNKYNQGISLNADVIQLVGFAHAFQDNIDLEQFRANHTITPLIAFNAGEHGKLSRVLNRTLTPVTSELLSNVSGNGQLTVGEINRCFSEIGGLSRRNFYIVGNPISHSRSPQLHTAGYEKLNLPHRFSKFETDYAQKVYEEVMTKPGFGGLAVTIPLKLDIMKYVSELSESAKIIGAVNTVTPLDGQPGKFYGDNTDWYGITQSFVRHGVPSFGNSSVNGMVVGGGGTSRAAAFALHQMGCKKIYMVNRTTSKLHEIKSSLPSDFNIEVLETVDQVEAADPVSLVVSCVPADKPLDSELLNKVERILYHGKNQEKRSFVPTLLDAAYKPRVTPIMKIAEEKFGWAVVPGVEMLVNQGVLQFKVHTVFTPPYKNVYEAVVDDNV.

The tract at residues 1-380 (MSQVEKVSIL…YQLKAHEVSK (380 aa)) is 3-dehydroquinate synthase. Residues 43–45 (DSN), 81–84 (ENNK), 112–114 (GGV), and D117 contribute to the NAD(+) site. R128 is a binding site for 7-phospho-2-dehydro-3-deoxy-D-arabino-heptonate. Position 137-138 (137-138 (TT)) interacts with NAD(+). 7-phospho-2-dehydro-3-deoxy-D-arabino-heptonate contacts are provided by D144 and K150. K159 contacts NAD(+). N160 is a binding site for 7-phospho-2-dehydro-3-deoxy-D-arabino-heptonate. NAD(+) contacts are provided by residues 177 to 180 (FLTT) and N188. Residue E192 coordinates Zn(2+). 7-phospho-2-dehydro-3-deoxy-D-arabino-heptonate is bound by residues 192–195 (EVVK) and K244. E254 serves as the catalytic Proton acceptor; for 3-dehydroquinate synthase activity. 7-phospho-2-dehydro-3-deoxy-D-arabino-heptonate-binding positions include 258 to 262 (RNLLN) and H265. Position 265 (H265) interacts with Zn(2+). H269 functions as the Proton acceptor; for 3-dehydroquinate synthase activity in the catalytic mechanism. Residues H281 and K352 each contribute to the 7-phospho-2-dehydro-3-deoxy-D-arabino-heptonate site. Residue H281 participates in Zn(2+) binding. The segment at 393–842 (VHPFQEETTP…WDVLHTKFGV (450 aa)) is EPSP synthase. C824 functions as the For EPSP synthase activity in the catalytic mechanism. Residues 867–1056 (DKSIVVIGMR…VPKGRSFVLS (190 aa)) are shikimate kinase. 874–881 (GMRAAGKS) provides a ligand contact to ATP. The 3-dehydroquinase stretch occupies residues 1057–1267 (LACSDLNDIA…SGNGQLTVGE (211 aa)). The interval 1280-1568 (RRNFYIVGNP…VYEAVVDDNV (289 aa)) is shikimate dehydrogenase.

In the N-terminal section; belongs to the sugar phosphate cyclases superfamily. Dehydroquinate synthase family. This sequence in the 2nd section; belongs to the EPSP synthase family. The protein in the 3rd section; belongs to the shikimate kinase family. It in the 4th section; belongs to the type-I 3-dehydroquinase family. In the C-terminal section; belongs to the shikimate dehydrogenase family. As to quaternary structure, homodimer. Zn(2+) is required as a cofactor.

It localises to the cytoplasm. The enzyme catalyses 7-phospho-2-dehydro-3-deoxy-D-arabino-heptonate = 3-dehydroquinate + phosphate. It catalyses the reaction 3-dehydroquinate = 3-dehydroshikimate + H2O. The catalysed reaction is shikimate + NADP(+) = 3-dehydroshikimate + NADPH + H(+). It carries out the reaction shikimate + ATP = 3-phosphoshikimate + ADP + H(+). The enzyme catalyses 3-phosphoshikimate + phosphoenolpyruvate = 5-O-(1-carboxyvinyl)-3-phosphoshikimate + phosphate. Its pathway is metabolic intermediate biosynthesis; chorismate biosynthesis; chorismate from D-erythrose 4-phosphate and phosphoenolpyruvate: step 2/7. The protein operates within metabolic intermediate biosynthesis; chorismate biosynthesis; chorismate from D-erythrose 4-phosphate and phosphoenolpyruvate: step 3/7. It participates in metabolic intermediate biosynthesis; chorismate biosynthesis; chorismate from D-erythrose 4-phosphate and phosphoenolpyruvate: step 4/7. It functions in the pathway metabolic intermediate biosynthesis; chorismate biosynthesis; chorismate from D-erythrose 4-phosphate and phosphoenolpyruvate: step 5/7. Its pathway is metabolic intermediate biosynthesis; chorismate biosynthesis; chorismate from D-erythrose 4-phosphate and phosphoenolpyruvate: step 6/7. The AROM polypeptide catalyzes 5 consecutive enzymatic reactions in prechorismate polyaromatic amino acid biosynthesis. The protein is Pentafunctional AROM polypeptide of Clavispora lusitaniae (strain ATCC 42720) (Yeast).